We begin with the raw amino-acid sequence, 474 residues long: MADSASESDTDGAGGNSSSSAAMQSSCSSTSGGGGGGGGGGGGGKSGGIVISPFRLEELTNRLASLQQENKVLKIELETYKLKCKALQEENRDLRKASVTIQARAEQEEEFISNTLFKKIQALQKEKETLAVNYEKEEEFLTNELSRKLMQLQHEKAELEQHLEQEQEFQVNKLMKKIKKLENDTISKQLTLEQLRREKIDLENTLEQEQEALVNRLWKRMDKLEAEKRILQEKLDQPVSAPPSPRDISMEIDSPENMMRHIRFLKNEVERLKKQLRAAQLQHSEKMAQYLEEERHMREENLRLQRKLQREMERREALCRQLSESESSLEMDDERYFNEMSAQGLRPRTVSSPIPYTPSPSSSRPISPGLSYASHTVGFTPPTSLTRAGMSYYNSPGLHVQHMGTSHGITRPSPRRSNSPDKFKRPTPPPSPNTQTPVQPPPPPPPPPMQPTVPSAATSQPTPSQHSAHPSSQP.

Residues Met1–Thr10 show a composition bias toward acidic residues. Positions Met1–Gly47 are disordered. N-acetylalanine is present on Ala2. The span at Asn16–Thr30 shows a compositional bias: low complexity. Residues Ser31–Gly47 are compositionally biased toward gly residues. At Ser52 the chain carries Phosphoserine. Residues Pro53–Gln237 adopt a coiled-coil conformation. 3 tandem repeats follow at residues Glu106 to Tyr134, Glu135 to Leu163, and Glu164 to Leu192. Residues Glu106–Leu235 are 5 X 29 AA tandem repeats. One copy of the 4; approximate repeat lies at Glu193 to Leu206. Copy 5 of the repeat occupies Glu207–Leu235. 6 positions are modified to phosphoserine: Ser240, Ser244, Ser249, Ser254, Ser284, and Ser323. Residues Asp253–Asp332 adopt a coiled-coil conformation. A disordered region spans residues Ala342–Gly369. Thr349 is modified (phosphothreonine). Residues Ser351–Pro368 show a composition bias toward low complexity. 2 positions are modified to phosphoserine: Ser363 and Ser367. The residue at position 387 (Arg387) is an Omega-N-methylarginine. Phosphoserine occurs at positions 395 and 413. A disordered region spans residues Gly397–Pro474. Residues Pro426–Pro451 show a composition bias toward pro residues. The SH3-binding signature appears at Pro442–Pro451. Residues Ser459–Pro474 are compositionally biased toward low complexity.

As to expression, ubiquitously expressed.

It is found in the cytoplasm. It localises to the cytoskeleton. This chain is Coiled-coil domain-containing protein 6 (CCDC6), found in Homo sapiens (Human).